The sequence spans 2025 residues: E3 ubiquitin-protein ligase TRIP12 (2025 aa).

Residues 1–10 (MSNRPNNNPG) are compositionally biased toward polar residues. The tract at residues 1–404 (MSNRPNNNPG…SGESESDDSE (404 aa)) is disordered. Ser-2 carries the N-acetylserine modification. Residue Ser-12 is modified to Phosphoserine. Residues 18–27 (RNTAGAQPQD) show a composition bias toward polar residues. Positions 48-70 (DPDRANTSERQKTGQVPKKDNSR) are enriched in basic and acidic residues. Phosphoserine occurs at positions 77, 85, and 100. 3 stretches are compositionally biased toward polar residues: residues 78–88 (PDYNRTNSPSS), 99–108 (ESLSETNKPP), and 119–132 (EQQL…STSK). Composition is skewed to low complexity over residues 154–166 (SSCV…SEST) and 175–216 (PTKL…SSTV). Lys-181 bears the N6-acetyllysine mark. Over residues 280 to 290 (PGSSKSETSKP) the composition is skewed to polar residues. A phosphoserine mark is found at Ser-310 and Ser-312. Residues 326 to 338 (QKTTGSCASTSRR) are compositionally biased toward polar residues. Over residues 346-358 (GAAEARRQEKMAD) the composition is skewed to basic and acidic residues. Polar residues predominate over residues 362–371 (NQETVNSSAA). Low complexity predominate over residues 379-397 (GAAASSSVAGAVGMTTSGE). The WWE domain occupies 755-869 (MLKKGNAQNT…DPELAKSFIK (115 aa)). The tract at residues 970–1077 (ESLLTSPPKA…QSPKSSFLAS (108 aa)) is disordered. Ser-975 is modified (phosphoserine). Over residues 983–1006 (GSGSLGSTTPASSGTATAATNASA) the composition is skewed to low complexity. Ser-1024 and Ser-1030 each carry phosphoserine. The segment covering 1034 to 1047 (KRKRLPKRGPRRPK) has biased composition (basic residues). Ser-1049 is subject to Phosphoserine. Basic and acidic residues predominate over residues 1050-1059 (PPRDDDKVDN). Positions 1062-1073 (KSPTTTQSPKSS) are enriched in low complexity. Phosphoserine is present on residues Ser-1063, Ser-1350, Ser-1355, Ser-1362, and Ser-1409. Thr-1410 carries the phosphothreonine modification. 2 disordered regions span residues 1440–1466 (SSKD…NAKK) and 1601–1620 (TNPE…PRLD). The residue at position 1458 (Lys-1458) is an N6-acetyllysine. Ser-1460 carries the phosphoserine modification. Residues 1529-1603 (EIIPTSEFIN…AMQRLLDTNP (75 aa)) form a K-box region. The 108-residue stretch at 1918-2025 (PDHGYTHDSR…REGQQSFHLS (108 aa)) folds into the HECT domain. The active-site Glycyl thioester intermediate is the Cys-1992.

Belongs to the UPL family. K-HECT subfamily. As to quaternary structure, interacts with MYC; leading to disrupt interaction with isoform p19ARF/ARF of CDKN2A. Interacts with TRADD; leading to disrupt interaction with isoform p19ARF/ARF of CDKN2A. Interacts with SMARCC1; leading to disrupt interaction with SMARCE1.

Its subcellular location is the nucleus. The protein resides in the nucleoplasm. The enzyme catalyses S-ubiquitinyl-[E2 ubiquitin-conjugating enzyme]-L-cysteine + [acceptor protein]-L-lysine = [E2 ubiquitin-conjugating enzyme]-L-cysteine + N(6)-ubiquitinyl-[acceptor protein]-L-lysine.. It functions in the pathway protein modification; protein ubiquitination. Functionally, E3 ubiquitin-protein ligase involved in ubiquitin fusion degradation (UFD) pathway and regulation of DNA repair. Part of the ubiquitin fusion degradation (UFD) pathway, a process that mediates ubiquitination of protein at their N-terminus, regardless of the presence of lysine residues in target proteins. Acts as a key regulator of DNA damage response by acting as a suppressor of RNF168, an E3 ubiquitin-protein ligase that promotes accumulation of 'Lys-63'-linked histone H2A and H2AX at DNA damage sites, thereby acting as a guard against excessive spreading of ubiquitinated chromatin at damaged chromosomes. In normal cells, mediates ubiquitination and degradation of isoform p19ARF/ARF of CDKN2A, a lysine-less tumor suppressor required for p53/TP53 activation under oncogenic stress. In cancer cells, however, isoform p19ARF/ARF and TRIP12 are located in different cell compartments, preventing isoform p19ARF/ARF ubiquitination and degradation. Does not mediate ubiquitination of isoform p16-INK4a of CDKN2A. Also catalyzes ubiquitination of NAE1 and SMARCE1, leading to their degradation. Ubiquitination and degradation of target proteins is regulated by interaction with proteins such as MYC, TRADD or SMARCC1, which disrupt the interaction between TRIP12 and target proteins. Mediates ubiquitination of ASXL1: following binding to N(6)-methyladenosine methylated DNA, ASXL1 is ubiquitinated by TRIP12, leading to its degradation and subsequent inactivation of the PR-DUB complex. This chain is E3 ubiquitin-protein ligase TRIP12 (Trip12), found in Rattus norvegicus (Rat).